A 189-amino-acid chain; its full sequence is Segregation and condensation protein B (189 aa).

Belongs to the ScpB family. As to quaternary structure, homodimer. Homodimerization may be required to stabilize the binding of ScpA to the Smc head domains. Component of a cohesin-like complex composed of ScpA, ScpB and the Smc homodimer, in which ScpA and ScpB bind to the head domain of Smc. The presence of the three proteins is required for the association of the complex with DNA.

The protein resides in the cytoplasm. Functionally, participates in chromosomal partition during cell division. May act via the formation of a condensin-like complex containing Smc and ScpA that pull DNA away from mid-cell into both cell halves. This chain is Segregation and condensation protein B, found in Streptococcus pneumoniae serotype 19F (strain G54).